The primary structure comprises 236 residues: CD81 antigen (236 aa).

Over 1–12 (MGVEGCTKCIKY) the chain is Cytoplasmic. The chain crosses the membrane as a helical span at residues 13 to 33 (LLFVFNFVFWLAGGVILGVAL). The Extracellular segment spans residues 34–63 (WLRHDPQTTNLLYLELGDKPAPNTFYVGIY). A helical transmembrane segment spans residues 64–84 (ILIAVGAVMMFVGFLGCYGAI). The Cytoplasmic portion of the chain corresponds to 85-89 (QESQC). Residues 90–112 (LLGTFFTCLVILFACEVAAGIWG) traverse the membrane as a helical segment. At 113-201 (FVNKDQIAKD…QKIDDLFSGK (89 aa)) the chain is on the extracellular side. 2 disulfides stabilise this stretch: cysteine 156-cysteine 190 and cysteine 157-cysteine 175. A helical transmembrane segment spans residues 202 to 224 (LYLIGIAAIVVAVIMIFEMILSM). Glutamate 219 is a cholesterol binding site. Residues 225–236 (VLCCGIRNSSVY) lie on the Cytoplasmic side of the membrane.

It belongs to the tetraspanin (TM4SF) family. As to quaternary structure, homodimer. Part of a complex composed of CD19, CR2/CD21, CD81 and IFITM1/CD225 in the membrane of mature B cells. Interacts (via the second extracellular domain) with CD19; this interaction is initiated early during biosynthesis in the ER and enables trafficking of only properly folded CD19. Part of a complex that includes MHC class II/HLA-DR molecules and IFITM1. Interacts with IFITM1. Interacts with IFITM2 and IFITM3. Part of integrin-tetraspanin complex composed of CD9, CD81, beta-1 and beta-2 integrins in the membrane of monocyte/macrophages. Interacts (via the second extracellular domain) with integrin ITGAV:ITGB3. Interacts with CD247/CD3 zeta, ICAM1 and CD9 at the immune synapse on T cell membrane. Part of a GPCR-tetraspanin complex consisting at least of ADGRG1, CD81, possibly CD9, and GNA11 in which CD81 enhances the association of ADGRG1 with GNA11. Part of a complex composed of CD9, CD81, PTGFRN and IGSF8. Interacts directly with IGSF8. Interacts with CD53 and SCIMP. Interacts with SAMHD1 (via its C-terminus). Interacts with glypican GPC3 and with the transcriptional repressor HHEX; binding to GPC3 decreases the availability of free CD81 for binding to HHEX, resulting in nuclear translocation of HHEX and transcriptional repression. Interacts with CLDN1. Interacts with CLDN6 and CLDN9. In terms of processing, not glycosylated. Post-translationally, likely constitutively palmitoylated at low levels. Protein palmitoylation is up-regulated upon coligation of BCR and CD9-C2R-CD81 complexes in lipid rafts.

The protein resides in the cell membrane. It is found in the basolateral cell membrane. Its function is as follows. Structural component of specialized membrane microdomains known as tetraspanin-enriched microdomains (TERMs), which act as platforms for receptor clustering and signaling. Essential for trafficking and compartmentalization of CD19 receptor on the surface of activated B cells. Upon initial encounter with microbial pathogens, enables the assembly of CD19-CR2/CD21 and B cell receptor (BCR) complexes at signaling TERMs, lowering the threshold dose of antigen required to trigger B cell clonal expansion and antibody production. In T cells, facilitates the localization of CD247/CD3 zeta at antigen-induced synapses with B cells, providing for costimulation and polarization toward T helper type 2 phenotype. Present in MHC class II compartments, may also play a role in antigen presentation. Can act both as positive and negative regulator of homotypic or heterotypic cell-cell fusion processes. Positively regulates sperm-egg fusion and may be involved in acrosome reaction. In myoblasts, associates with CD9 and PTGFRN and inhibits myotube fusion during muscle regeneration. In macrophages, associates with CD9 and beta-1 and beta-2 integrins, and prevents macrophage fusion into multinucleated giant cells specialized in ingesting complement-opsonized large particles. Also prevents the fusion of mononuclear cell progenitors into osteoclasts in charge of bone resorption. May regulate the compartmentalization of enzymatic activities. In T cells, defines the subcellular localization of dNTPase SAMHD1 and permits its degradation by the proteasome, thereby controlling intracellular dNTP levels. Also involved in cell adhesion and motility. Positively regulates integrin-mediated adhesion of macrophages, particularly relevant for the inflammatory response in the lung. The polypeptide is CD81 antigen (CD81) (Pan troglodytes (Chimpanzee)).